A 21-amino-acid chain; its full sequence is Mast cell protease 3 (21 aa).

A Peptidase S1 domain is found at 1–21 (IIGGVESRPHSRPYMATLEIT). Residues 1-21 (IIGGVESRPHSRPYMATLEIT) form a disordered region.

Belongs to the peptidase S1 family. Granzyme subfamily.

Thrombin inactivating protease. Displays chymotrypsin-like substrate specificity. The protein is Mast cell protease 3 (Mcpt3) of Mus musculus (Mouse).